We begin with the raw amino-acid sequence, 135 residues long: Peptide methionine sulfoxide reductase MsrB (135 aa).

A MsrB domain is found at 9-131; it reads DDYWRSKLTD…NSASIQFEEE (123 aa). Zn(2+) contacts are provided by C48, C51, C97, and C100. Catalysis depends on C120, which acts as the Nucleophile.

This sequence belongs to the MsrB Met sulfoxide reductase family. Zn(2+) serves as cofactor.

The enzyme catalyses L-methionyl-[protein] + [thioredoxin]-disulfide + H2O = L-methionyl-(R)-S-oxide-[protein] + [thioredoxin]-dithiol. The polypeptide is Peptide methionine sulfoxide reductase MsrB (Teredinibacter turnerae (strain ATCC 39867 / T7901)).